The chain runs to 202 residues: Transmembrane protein 223 (202 aa).

Topologically, residues 1–43 are mitochondrial matrix; it reads MAAPWRRWPTGLLAVLRPLLTCRPLQGTTLQRDVLLFEHDRGR. A helical transmembrane segment spans residues 44 to 64; it reads FFTILGLFCAGQGVFWASMAV. Over 65 to 97 the chain is Mitochondrial intermembrane; sequence AAVSRPPVPVQPLDAEVPNRGPFDLRSALWRYG. The chain crosses the membrane as a helical span at residues 98–118; sequence LAVGCGAIGALVLGAGLLFSL. Residues 119–202 are Mitochondrial matrix-facing; it reads RSVRSVVLRA…DNTVGAYRSL (84 aa).

The protein belongs to the TMEM223 family. As to quaternary structure, associates with the mitochondrial ribosome.

It localises to the mitochondrion inner membrane. Its function is as follows. Mitochondrial ribosome-associated protein involved in the first steps of cytochrome c oxidase complex (complex IV) biogenesis. Stimulates the translation of MT-CO1 mRNA and is a constituent of early MT-CO1 assembly intermediates. In Homo sapiens (Human), this protein is Transmembrane protein 223.